A 428-amino-acid polypeptide reads, in one-letter code: Anaerobic glycerol-3-phosphate dehydrogenase subunit B (428 aa).

It belongs to the anaerobic G-3-P dehydrogenase subunit B family. Composed of a catalytic GlpA/B dimer and of membrane bound GlpC. FMN serves as cofactor.

The enzyme catalyses a quinone + sn-glycerol 3-phosphate = dihydroxyacetone phosphate + a quinol. It functions in the pathway polyol metabolism; glycerol degradation via glycerol kinase pathway; glycerone phosphate from sn-glycerol 3-phosphate (anaerobic route): step 1/1. Conversion of glycerol 3-phosphate to dihydroxyacetone. Uses fumarate or nitrate as electron acceptor. The polypeptide is Anaerobic glycerol-3-phosphate dehydrogenase subunit B (Pasteurella multocida (strain Pm70)).